The following is a 179-amino-acid chain: Translation initiation factor IF-3 (179 aa).

It belongs to the IF-3 family. In terms of assembly, monomer.

The protein localises to the cytoplasm. Its function is as follows. IF-3 binds to the 30S ribosomal subunit and shifts the equilibrium between 70S ribosomes and their 50S and 30S subunits in favor of the free subunits, thus enhancing the availability of 30S subunits on which protein synthesis initiation begins. The sequence is that of Translation initiation factor IF-3 from Leptospira interrogans serogroup Icterohaemorrhagiae serovar copenhageni (strain Fiocruz L1-130).